The chain runs to 119 residues: Large ribosomal subunit protein bL20 (119 aa).

This sequence belongs to the bacterial ribosomal protein bL20 family.

Binds directly to 23S ribosomal RNA and is necessary for the in vitro assembly process of the 50S ribosomal subunit. It is not involved in the protein synthesizing functions of that subunit. This Bordetella petrii (strain ATCC BAA-461 / DSM 12804 / CCUG 43448) protein is Large ribosomal subunit protein bL20.